Consider the following 757-residue polypeptide: Cellulose synthase-like protein B1 (757 aa).

The next 2 helical transmembrane spans lie at 18-38 (TNYF…SLLL) and 50-70 (VWLV…LITC). The active site involves Asp-136. Residues 186 to 216 (EFNRDWEKTKREYEKLRRKVEDATGDSHMLD) are a coiled coil. Asp-462 is a catalytic residue. 6 consecutive transmembrane segments (helical) span residues 533 to 553 (LAYL…YCLL), 569 to 589 (LYLG…LWEF), 615 to 635 (LFSI…VFII), 674 to 694 (FLPG…FSVG), 710 to 730 (AEAC…MGLF), and 737 to 757 (TPLS…VFSV).

This sequence belongs to the glycosyltransferase 2 family. Plant cellulose synthase-like B subfamily. In terms of tissue distribution, expressed in young seedlings, primarily in the vascular tissue.

It is found in the golgi apparatus membrane. Thought to be a Golgi-localized beta-glycan synthase that polymerize the backbones of noncellulosic polysaccharides (hemicelluloses) of plant cell wall. The polypeptide is Cellulose synthase-like protein B1 (CSLB1) (Arabidopsis thaliana (Mouse-ear cress)).